We begin with the raw amino-acid sequence, 496 residues long: Glutamate--tRNA ligase 2 (496 aa).

The short motif at Pro13–Gly23 is the 'HIGH' region element. The short motif at Lys255 to Arg259 is the 'KMSKS' region element. Lys258 contacts ATP.

Belongs to the class-I aminoacyl-tRNA synthetase family. Glutamate--tRNA ligase type 1 subfamily. Monomer.

The protein resides in the cytoplasm. It carries out the reaction tRNA(Glu) + L-glutamate + ATP = L-glutamyl-tRNA(Glu) + AMP + diphosphate. In terms of biological role, catalyzes the attachment of glutamate to tRNA(Glu) in a two-step reaction: glutamate is first activated by ATP to form Glu-AMP and then transferred to the acceptor end of tRNA(Glu). The chain is Glutamate--tRNA ligase 2 from Rubrobacter xylanophilus (strain DSM 9941 / JCM 11954 / NBRC 16129 / PRD-1).